The sequence spans 304 residues: Mitochondrial glycine transporter (304 aa).

Solcar repeat units lie at residues 25–114 (HPVI…LKQY), 121–205 (PTAL…TKNI), and 215–299 (LIPI…MMAK). 6 consecutive transmembrane segments (helical) span residues 31–56 (FLCGSISGTCSTLLFQPLDLLKTRLQ), 89–115 (GMSPSIVRCVPGVGIYFGTLYSLKQYF), 127–152 (VMLGVGSRSVAGVCMSPITVIKTRYE), 180–203 (GLTATLLRDAPFSGIYLMFYNQTK), 219–245 (TNFSCGIFAGILASLVTQPADVIKTHM), and 274–292 (GGIPRALRRTLMAAMAWTV).

Belongs to the mitochondrial carrier (TC 2.A.29) family. SLC25A38 subfamily. In terms of tissue distribution, preferentially expressed in erythroid cells.

The protein localises to the mitochondrion inner membrane. The enzyme catalyses glycine(in) = glycine(out). Its function is as follows. Mitochondrial glycine transporter that imports glycine into the mitochondrial matrix. Plays an important role in providing glycine for the first enzymatic step in heme biosynthesis, the condensation of glycine with succinyl-CoA to produce 5-aminolevulinate (ALA) in the mitochondrial matrix. Required during erythropoiesis. Functionally, plays a role as pro-apoptotic protein that induces caspase-dependent apoptosis. The chain is Mitochondrial glycine transporter from Homo sapiens (Human).